Reading from the N-terminus, the 286-residue chain is Protease HtpX homolog (286 aa).

The next 2 helical transmembrane spans lie at 6 to 26 and 28 to 48; these read TCFLMVVLMLLFVFVGGYVGG and QGMIIAFLVALGMNFFSYFFS. Residue H130 coordinates Zn(2+). Residue E131 is part of the active site. A Zn(2+)-binding site is contributed by H134. The next 2 helical transmembrane spans lie at 140–160 and 178–198; these read ILTGSIAAVMAGAIAMLANFA and AIMLIIALIMPLAATIIQMAI. Zn(2+) is bound at residue E203.

It belongs to the peptidase M48B family. It depends on Zn(2+) as a cofactor.

The protein resides in the cell inner membrane. This chain is Protease HtpX homolog, found in Campylobacter curvus (strain 525.92).